The chain runs to 190 residues: Coat protein (190 aa).

It belongs to the potexvirus capsid protein family.

It localises to the virion. In terms of biological role, required for genome encapsidation. Forms ribonucleoprotein complexes along with TGB1 helicase and viral RNA. This is Coat protein from White clover mosaic virus (strain M) (WCMV).